Consider the following 465-residue polypeptide: Ubiquitin carboxyl-terminal hydrolase UCH54 (465 aa).

A UCH catalytic domain is found at 11-333; that stretch reads EWCLIESNPC…VRFNIIAVMK (323 aa). Catalysis depends on cysteine 145, which acts as the Nucleophile. The Proton donor role is filled by histidine 220. Residues 244–293 are disordered; it reads INADEQNKPNPNNNNNNKDNDNDNNNNNNNNNNNNNNNNNNNNNNNNNNI. Residues 251 to 292 are compositionally biased toward low complexity; the sequence is KPNPNNNNNNKDNDNDNNNNNNNNNNNNNNNNNNNNNNNNNN. A ULD domain is found at 432–460; that stretch reads NFYPFIMSSLNLMAKHKLLKDAYQKEKLK.

It belongs to the peptidase C12 family.

The catalysed reaction is Thiol-dependent hydrolysis of ester, thioester, amide, peptide and isopeptide bonds formed by the C-terminal Gly of ubiquitin (a 76-residue protein attached to proteins as an intracellular targeting signal).. Functionally, thiol protease that recognizes and hydrolyzes a peptide bond at the C-terminal glycine of either ubiquitin or NEDD8. This Plasmodium falciparum (isolate 3D7) protein is Ubiquitin carboxyl-terminal hydrolase UCH54.